Here is a 119-residue protein sequence, read N- to C-terminus: Large ribosomal subunit protein uL18 (119 aa).

The segment at 1–26 (MGQNDKAARRQKIKLRSKTRGQGTAA) is disordered. The segment covering 9–19 (RRQKIKLRSKT) has biased composition (basic residues).

Belongs to the universal ribosomal protein uL18 family. In terms of assembly, part of the 50S ribosomal subunit; part of the 5S rRNA/L5/L18/L25 subcomplex. Contacts the 5S and 23S rRNAs.

Its function is as follows. This is one of the proteins that bind and probably mediate the attachment of the 5S RNA into the large ribosomal subunit, where it forms part of the central protuberance. This chain is Large ribosomal subunit protein uL18, found in Prosthecochloris aestuarii (strain DSM 271 / SK 413).